Consider the following 337-residue polypeptide: Phosphate acyltransferase (337 aa).

Belongs to the PlsX family. As to quaternary structure, homodimer. Probably interacts with PlsY.

The protein resides in the cytoplasm. The catalysed reaction is a fatty acyl-[ACP] + phosphate = an acyl phosphate + holo-[ACP]. It participates in lipid metabolism; phospholipid metabolism. Its function is as follows. Catalyzes the reversible formation of acyl-phosphate (acyl-PO(4)) from acyl-[acyl-carrier-protein] (acyl-ACP). This enzyme utilizes acyl-ACP as fatty acyl donor, but not acyl-CoA. In Ehrlichia chaffeensis (strain ATCC CRL-10679 / Arkansas), this protein is Phosphate acyltransferase.